The sequence spans 130 residues: MPASLRSPLAIILGAIPGALARYYATIFLAGLFGNDLPYATFLINFSGCVGMGLVVTLATQPALMSPDLRLLLAVGFLGSYTTFSTYALEVTSLWRMGQLGQGVLYGLGSLGIGTIGVLLGSLIARRLTI.

A run of 4 helical transmembrane segments spans residues 9–29 (LAII…TIFL), 39–59 (YATF…VTLA), 71–91 (LLLA…ALEV), and 104–124 (VLYG…GSLI). 2 residues coordinate Na(+): G79 and T82.

It belongs to the fluoride channel Fluc/FEX (TC 1.A.43) family.

Its subcellular location is the cell inner membrane. It catalyses the reaction fluoride(in) = fluoride(out). Its activity is regulated as follows. Na(+) is not transported, but it plays an essential structural role and its presence is essential for fluoride channel function. In terms of biological role, fluoride-specific ion channel. Important for reducing fluoride concentration in the cell, thus reducing its toxicity. The polypeptide is Fluoride-specific ion channel FluC (Synechocystis sp. (strain ATCC 27184 / PCC 6803 / Kazusa)).